A 185-amino-acid chain; its full sequence is Peptidyl-tRNA hydrolase (185 aa).

Tyr-14 is a tRNA binding site. The Proton acceptor role is filled by His-19. Positions 64, 66, and 112 each coordinate tRNA.

It belongs to the PTH family. Monomer.

The protein resides in the cytoplasm. The catalysed reaction is an N-acyl-L-alpha-aminoacyl-tRNA + H2O = an N-acyl-L-amino acid + a tRNA + H(+). Hydrolyzes ribosome-free peptidyl-tRNAs (with 1 or more amino acids incorporated), which drop off the ribosome during protein synthesis, or as a result of ribosome stalling. Its function is as follows. Catalyzes the release of premature peptidyl moieties from peptidyl-tRNA molecules trapped in stalled 50S ribosomal subunits, and thus maintains levels of free tRNAs and 50S ribosomes. The protein is Peptidyl-tRNA hydrolase of Alkaliphilus oremlandii (strain OhILAs) (Clostridium oremlandii (strain OhILAs)).